A 466-amino-acid chain; its full sequence is Ribulose bisphosphate carboxylase large chain (466 aa).

Position 5 is an N6,N6,N6-trimethyllysine (lysine 5). The substrate site is built by asparagine 114 and threonine 164. Lysine 166 acts as the Proton acceptor in catalysis. Lysine 168 provides a ligand contact to substrate. 3 residues coordinate Mg(2+): lysine 192, aspartate 194, and glutamate 195. Residue lysine 192 is modified to N6-carboxylysine. Residue histidine 285 is the Proton acceptor of the active site. Residues arginine 286, histidine 318, and serine 370 each contribute to the substrate site.

Belongs to the RuBisCO large chain family. Type I subfamily. Heterohexadecamer of 8 large chains and 8 small chains; disulfide-linked. The disulfide link is formed within the large subunit homodimers. Requires Mg(2+) as cofactor. In terms of processing, the disulfide bond which can form in the large chain dimeric partners within the hexadecamer appears to be associated with oxidative stress and protein turnover.

Its subcellular location is the plastid. It localises to the chloroplast. It carries out the reaction 2 (2R)-3-phosphoglycerate + 2 H(+) = D-ribulose 1,5-bisphosphate + CO2 + H2O. It catalyses the reaction D-ribulose 1,5-bisphosphate + O2 = 2-phosphoglycolate + (2R)-3-phosphoglycerate + 2 H(+). Its function is as follows. RuBisCO catalyzes two reactions: the carboxylation of D-ribulose 1,5-bisphosphate, the primary event in carbon dioxide fixation, as well as the oxidative fragmentation of the pentose substrate in the photorespiration process. Both reactions occur simultaneously and in competition at the same active site. The polypeptide is Ribulose bisphosphate carboxylase large chain (Asarum canadense (Wild ginger)).